A 63-amino-acid chain; its full sequence is uncharacterized protein (63 aa).

A helical membrane pass occupies residues 38 to 58 (ISLFIILHLCLLVCLLLSFYF).

The protein localises to the membrane. This is an uncharacterized protein from Saccharomyces cerevisiae (strain ATCC 204508 / S288c) (Baker's yeast).